A 753-amino-acid chain; its full sequence is Subtilisin-like protease SBT3.17 (753 aa).

The first 29 residues, 1–29, serve as a signal peptide directing secretion; that stretch reads MGNSFLIADTSSLVIGLLLILNGVFISAA. Residues 30–116 constitute a propeptide, activation peptide; the sequence is KHYGLNKIHI…VVPSRVMRLK (87 aa). Positions 38–115 constitute an Inhibitor I9 domain; that stretch reads HIVHLGAKQH…RVVPSRVMRL (78 aa). N-linked (GlcNAc...) asparagine glycosylation occurs at Asn97. A Peptidase S8 domain is found at 120-603; it reads TFDYLGLLPT…GGLINPEKVT (484 aa). Asp150 (charge relay system) is an active-site residue. N-linked (GlcNAc...) asparagine glycosylation occurs at Asn161. The Charge relay system role is filled by His227. An N-linked (GlcNAc...) asparagine glycan is attached at Asn369. Residue Ser534 is the Charge relay system of the active site. 3 N-linked (GlcNAc...) asparagine glycosylation sites follow: Asn639, Asn704, and Asn737.

Belongs to the peptidase S8 family.

It localises to the secreted. This chain is Subtilisin-like protease SBT3.17, found in Arabidopsis thaliana (Mouse-ear cress).